Reading from the N-terminus, the 245-residue chain is MASRSVISFLYQQGGLSLAELPPAFLAPALYSTKASFNSQRSQFSTSSSPAARDRSRFRGVSAIHRTGPKQPLPVSKYPLPKPASPEQQEKRPANPDHGLWGFFGPNKQAIPTPEEEYAHGRAWTIQELRQKSWDDLHCLWWVTVRERNRIATSNYERKRLAAGYGDFEADNRDKTVRATQHAIKHVLRERWYAWNEARELYNGGYRPSPDEVLEEETETAMPTEVMPEELDSSTKSETTTSKNI.

2 stretches are compositionally biased toward low complexity: residues 36–49 (SFNS…TSSS) and 234–245 (STKSETTTSKNI). Disordered stretches follow at residues 36–98 (SFNS…NPDH) and 207–245 (RPSP…SKNI).

This sequence belongs to the universal ribosomal protein uL29 family. In terms of assembly, component of the mitochondrial large ribosomal subunit. Mature mitochondrial ribosomes consist of a small (37S) and a large (54S) subunit. The 37S subunit contains at least 33 different proteins and 1 molecule of RNA (15S). The 54S subunit contains at least 45 different proteins and 1 molecule of RNA (21S).

The protein localises to the mitochondrion. This is Large ribosomal subunit protein uL29m (MRPL4) from Coccidioides immitis (strain RS) (Valley fever fungus).